The sequence spans 694 residues: Polyphosphate kinase (694 aa).

Residue N45 participates in ATP binding. 2 residues coordinate Mg(2+): R367 and R397. H427 functions as the Phosphohistidine intermediate in the catalytic mechanism. Residues Y460, R553, and H580 each contribute to the ATP site.

This sequence belongs to the polyphosphate kinase 1 (PPK1) family. It depends on Mg(2+) as a cofactor. An intermediate of this reaction is the autophosphorylated ppk in which a phosphate is covalently linked to a histidine residue through a N-P bond.

The enzyme catalyses [phosphate](n) + ATP = [phosphate](n+1) + ADP. Functionally, catalyzes the reversible transfer of the terminal phosphate of ATP to form a long-chain polyphosphate (polyP). This Campylobacter jejuni subsp. jejuni serotype O:6 (strain 81116 / NCTC 11828) protein is Polyphosphate kinase.